The sequence spans 467 residues: Acetaldehyde dehydrogenase (acetylating) EutE (467 aa).

The protein belongs to the EutE/PduP family. Interacts with EutS, which targets it to the interior of the BMC. Has a very strong preference for NAD(+) over NADP(+). is required as a cofactor.

The protein resides in the bacterial microcompartment. The enzyme catalyses acetaldehyde + NAD(+) + CoA = acetyl-CoA + NADH + H(+). It participates in amine and polyamine degradation; ethanolamine degradation. In terms of biological role, acts as the second step in ethanolamine degradation by converting acetaldehyde into acetyl-CoA. May play a role in bacterial microcompartment (BMC) assembly or maintenance. Directly targeted to the BMC. Its heterologous expression in S.cerevisiae increases the level of acetylating acetaldehyde dehydrogenase activity. The chain is Acetaldehyde dehydrogenase (acetylating) EutE (eutE) from Escherichia coli (strain K12).